Reading from the N-terminus, the 460-residue chain is Elongation factor 1-alpha-B (460 aa).

G2 bears the N,N,N-trimethylglycine mark. The residue at position 3 (K3) is an N6,N6-dimethyllysine; alternate. The residue at position 3 (K3) is an N6-methyllysine; alternate. Residues 5–240 (KGHINVVVIG…DSIEPPARPT (236 aa)) enclose the tr-type G domain. The segment at 14 to 21 (GHVDSGKS) is G1. 14–21 (GHVDSGKS) is a binding site for GTP. K30 carries the post-translational modification N6-methyllysine. A G2 region spans residues 70–74 (GITID). N6,N6,N6-trimethyllysine is present on K79. The tract at residues 91–94 (DAPG) is G3. Residues 91 to 95 (DAPGH) and 153 to 156 (NKMD) each bind GTP. A G4 region spans residues 153–156 (NKMD). The tract at residues 192–194 (SGF) is G5. K316 is modified (N6,N6-dimethyllysine; alternate). K316 carries the post-translational modification N6-methyllysine; alternate. K390 carries the N6-methyllysine modification.

Belongs to the TRAFAC class translation factor GTPase superfamily. Classic translation factor GTPase family. EF-Tu/EF-1A subfamily.

It is found in the cytoplasm. Its function is as follows. This protein promotes the GTP-dependent binding of aminoacyl-tRNA to the A-site of ribosomes during protein biosynthesis. The polypeptide is Elongation factor 1-alpha-B (tef102) (Schizosaccharomyces pombe (strain 972 / ATCC 24843) (Fission yeast)).